The following is a 165-amino-acid chain: Phosphopantetheine adenylyltransferase (165 aa).

Thr-9 is a substrate binding site. ATP contacts are provided by residues 9–10 and His-17; that span reads TF. 3 residues coordinate substrate: Lys-41, Leu-73, and Arg-87. Residues 88 to 90, Glu-98, and 123 to 129 each bind ATP; these read GLR and YQFISGT.

Belongs to the bacterial CoaD family. In terms of assembly, homohexamer. Mg(2+) serves as cofactor.

Its subcellular location is the cytoplasm. It catalyses the reaction (R)-4'-phosphopantetheine + ATP + H(+) = 3'-dephospho-CoA + diphosphate. The protein operates within cofactor biosynthesis; coenzyme A biosynthesis; CoA from (R)-pantothenate: step 4/5. In terms of biological role, reversibly transfers an adenylyl group from ATP to 4'-phosphopantetheine, yielding dephospho-CoA (dPCoA) and pyrophosphate. In Polynucleobacter necessarius subsp. necessarius (strain STIR1), this protein is Phosphopantetheine adenylyltransferase.